A 482-amino-acid polypeptide reads, in one-letter code: tRNA sulfurtransferase (482 aa).

The 105-residue stretch at 61 to 165 (LTIRDALTRI…DDRLLLIKGR (105 aa)) folds into the THUMP domain. ATP contacts are provided by residues 183–184 (LI), K265, G287, and Q296. C344 and C456 form a disulfide bridge. One can recognise a Rhodanese domain in the interval 404–482 (CGPNDVILDI…GFNNVKVYRP (79 aa)). Residue C456 is the Cysteine persulfide intermediate of the active site.

It belongs to the ThiI family.

It is found in the cytoplasm. It catalyses the reaction [ThiI sulfur-carrier protein]-S-sulfanyl-L-cysteine + a uridine in tRNA + 2 reduced [2Fe-2S]-[ferredoxin] + ATP + H(+) = [ThiI sulfur-carrier protein]-L-cysteine + a 4-thiouridine in tRNA + 2 oxidized [2Fe-2S]-[ferredoxin] + AMP + diphosphate. It carries out the reaction [ThiS sulfur-carrier protein]-C-terminal Gly-Gly-AMP + S-sulfanyl-L-cysteinyl-[cysteine desulfurase] + AH2 = [ThiS sulfur-carrier protein]-C-terminal-Gly-aminoethanethioate + L-cysteinyl-[cysteine desulfurase] + A + AMP + 2 H(+). The protein operates within cofactor biosynthesis; thiamine diphosphate biosynthesis. Its function is as follows. Catalyzes the ATP-dependent transfer of a sulfur to tRNA to produce 4-thiouridine in position 8 of tRNAs, which functions as a near-UV photosensor. Also catalyzes the transfer of sulfur to the sulfur carrier protein ThiS, forming ThiS-thiocarboxylate. This is a step in the synthesis of thiazole, in the thiamine biosynthesis pathway. The sulfur is donated as persulfide by IscS. The chain is tRNA sulfurtransferase from Shigella dysenteriae serotype 1 (strain Sd197).